The following is a 106-amino-acid chain: ATP-dependent Clp protease adapter protein ClpS (106 aa).

The protein belongs to the ClpS family. In terms of assembly, binds to the N-terminal domain of the chaperone ClpA.

In terms of biological role, involved in the modulation of the specificity of the ClpAP-mediated ATP-dependent protein degradation. The protein is ATP-dependent Clp protease adapter protein ClpS of Sodalis glossinidius (strain morsitans).